The primary structure comprises 247 residues: Uroporphyrinogen-III C-methyltransferase (247 aa).

Residues P12, 117 to 118 (TA), M168, A197, and A225 each bind S-adenosyl-L-homocysteine.

Belongs to the precorrin methyltransferase family.

It catalyses the reaction uroporphyrinogen III + 2 S-adenosyl-L-methionine = precorrin-2 + 2 S-adenosyl-L-homocysteine + H(+). Its pathway is cofactor biosynthesis; adenosylcobalamin biosynthesis; precorrin-2 from uroporphyrinogen III: step 1/1. It functions in the pathway porphyrin-containing compound metabolism; siroheme biosynthesis; precorrin-2 from uroporphyrinogen III: step 1/1. Functionally, catalyzes the two successive C-2 and C-7 methylation reactions involved in the conversion of uroporphyrinogen III to precorrin-2 via the intermediate formation of precorrin-1. It is a step in the biosynthesis of both cobalamin (vitamin B12) and siroheme. The sequence is that of Uroporphyrinogen-III C-methyltransferase from Pseudomonas fluorescens.